A 556-amino-acid polypeptide reads, in one-letter code: Cell wall integrity and stress response component 3 (556 aa).

A signal peptide spans M1–A38. Residues D39–A132 form the WSC domain. Residues D39 to G384 lie on the Extracellular side of the membrane. The N-linked (GlcNAc...) asparagine glycan is linked to N84. Composition is skewed to low complexity over residues S142 to T169 and T184 to S257. 2 disordered regions span residues S142 to S257 and T269 to S312. 2 N-linked (GlcNAc...) asparagine glycosylation sites follow: N367 and N370. The chain crosses the membrane as a helical span at residues I385–W405. The Cytoplasmic portion of the chain corresponds to R406–A556. Disordered regions lie at residues Y425 to T444 and L534 to A556. A compositionally biased stretch (polar residues) spans E546 to A556.

It is found in the membrane. In Saccharomyces cerevisiae (strain ATCC 204508 / S288c) (Baker's yeast), this protein is Cell wall integrity and stress response component 3 (WSC3).